A 376-amino-acid chain; its full sequence is N-glycosylase/DNA lyase (376 aa).

DNA is bound by residues Asn-134, Arg-139, and Arg-189. The Schiff-base intermediate with DNA role is filled by Lys-241. 8-oxoguanine contacts are provided by Pro-258 and Asp-260. His-262 provides a ligand contact to DNA. 2 residues coordinate 8-oxoguanine: Gln-320 and Phe-324.

The protein belongs to the type-1 OGG1 family.

It is found in the nucleus. The catalysed reaction is 2'-deoxyribonucleotide-(2'-deoxyribose 5'-phosphate)-2'-deoxyribonucleotide-DNA = a 3'-end 2'-deoxyribonucleotide-(2,3-dehydro-2,3-deoxyribose 5'-phosphate)-DNA + a 5'-end 5'-phospho-2'-deoxyribonucleoside-DNA + H(+). DNA repair enzyme that incises DNA at 8-oxoG residues. Excises 7,8-dihydro-8-oxoguanine and 2,6-diamino-4-hydroxy-5-N-methylformamidopyrimidine (FAPY) from damaged DNA. Has a beta-lyase activity that nicks DNA 3' to the lesion. This Saccharomyces cerevisiae (strain ATCC 204508 / S288c) (Baker's yeast) protein is N-glycosylase/DNA lyase (OGG1).